The primary structure comprises 465 residues: 23S rRNA (uracil(1939)-C(5))-methyltransferase RlmD (465 aa).

The disordered stretch occupies residues 1–22 (MSEAVPTSARKSKNAPVAPGPA). The TRAM domain maps to 16 to 80 (PVAPGPAPVL…PSYEQATVVD (65 aa)). [4Fe-4S] cluster contacts are provided by C93, C99, C102, and C181. Residues Q289, F318, N323, E339, N367, and D388 each coordinate S-adenosyl-L-methionine. C421 (nucleophile) is an active-site residue.

It belongs to the class I-like SAM-binding methyltransferase superfamily. RNA M5U methyltransferase family. RlmD subfamily.

The catalysed reaction is uridine(1939) in 23S rRNA + S-adenosyl-L-methionine = 5-methyluridine(1939) in 23S rRNA + S-adenosyl-L-homocysteine + H(+). Functionally, catalyzes the formation of 5-methyl-uridine at position 1939 (m5U1939) in 23S rRNA. In Burkholderia ambifaria (strain ATCC BAA-244 / DSM 16087 / CCUG 44356 / LMG 19182 / AMMD) (Burkholderia cepacia (strain AMMD)), this protein is 23S rRNA (uracil(1939)-C(5))-methyltransferase RlmD.